Reading from the N-terminus, the 270-residue chain is Putative phosphoenolpyruvate synthase regulatory protein (270 aa).

Position 149–156 (149–156 (GVSRSGKT)) interacts with ADP.

Belongs to the pyruvate, phosphate/water dikinase regulatory protein family. PSRP subfamily.

The catalysed reaction is [pyruvate, water dikinase] + ADP = [pyruvate, water dikinase]-phosphate + AMP + H(+). The enzyme catalyses [pyruvate, water dikinase]-phosphate + phosphate + H(+) = [pyruvate, water dikinase] + diphosphate. Bifunctional serine/threonine kinase and phosphorylase involved in the regulation of the phosphoenolpyruvate synthase (PEPS) by catalyzing its phosphorylation/dephosphorylation. The chain is Putative phosphoenolpyruvate synthase regulatory protein from Pseudoalteromonas atlantica (strain T6c / ATCC BAA-1087).